A 646-amino-acid chain; its full sequence is Heat shock 70 kDa protein (646 aa).

Over residues 613–632 (GGAPGGMPGAAPGGFPGGAP) the composition is skewed to gly residues. The interval 613-646 (GGAPGGMPGAAPGGFPGGAPGSNDNEGPTVEEVD) is disordered.

This sequence belongs to the heat shock protein 70 family.

This Neurospora crassa (strain ATCC 24698 / 74-OR23-1A / CBS 708.71 / DSM 1257 / FGSC 987) protein is Heat shock 70 kDa protein (hsps-1).